Consider the following 145-residue polypeptide: D-aminoacyl-tRNA deacylase (145 aa).

Positions 137–138 (GP) match the Gly-cisPro motif, important for rejection of L-amino acids motif.

The protein belongs to the DTD family. As to quaternary structure, homodimer.

Its subcellular location is the cytoplasm. The catalysed reaction is glycyl-tRNA(Ala) + H2O = tRNA(Ala) + glycine + H(+). It carries out the reaction a D-aminoacyl-tRNA + H2O = a tRNA + a D-alpha-amino acid + H(+). Functionally, an aminoacyl-tRNA editing enzyme that deacylates mischarged D-aminoacyl-tRNAs. Also deacylates mischarged glycyl-tRNA(Ala), protecting cells against glycine mischarging by AlaRS. Acts via tRNA-based rather than protein-based catalysis; rejects L-amino acids rather than detecting D-amino acids in the active site. By recycling D-aminoacyl-tRNA to D-amino acids and free tRNA molecules, this enzyme counteracts the toxicity associated with the formation of D-aminoacyl-tRNA entities in vivo and helps enforce protein L-homochirality. This chain is D-aminoacyl-tRNA deacylase, found in Limosilactobacillus fermentum (strain NBRC 3956 / LMG 18251) (Lactobacillus fermentum).